The primary structure comprises 457 residues: Siroheme synthase (457 aa).

A precorrin-2 dehydrogenase /sirohydrochlorin ferrochelatase region spans residues 1–204; that stretch reads MDHLPIFCQL…ADEKAVNATT (204 aa). Residues 22 to 23 and 43 to 44 contribute to the NAD(+) site; these read DV and LT. S128 is modified (phosphoserine). Positions 216-457 are uroporphyrinogen-III C-methyltransferase; that stretch reads GEVVLVGAGP…RDKLNWFSNY (242 aa). P225 lines the S-adenosyl-L-methionine pocket. The Proton acceptor role is filled by D248. The active-site Proton donor is the K270. S-adenosyl-L-methionine contacts are provided by residues 301–303, I306, 331–332, M382, and G411; these read GGD and TA.

This sequence in the N-terminal section; belongs to the precorrin-2 dehydrogenase / sirohydrochlorin ferrochelatase family. In the C-terminal section; belongs to the precorrin methyltransferase family.

The enzyme catalyses uroporphyrinogen III + 2 S-adenosyl-L-methionine = precorrin-2 + 2 S-adenosyl-L-homocysteine + H(+). It carries out the reaction precorrin-2 + NAD(+) = sirohydrochlorin + NADH + 2 H(+). The catalysed reaction is siroheme + 2 H(+) = sirohydrochlorin + Fe(2+). It participates in cofactor biosynthesis; adenosylcobalamin biosynthesis; precorrin-2 from uroporphyrinogen III: step 1/1. The protein operates within cofactor biosynthesis; adenosylcobalamin biosynthesis; sirohydrochlorin from precorrin-2: step 1/1. It functions in the pathway porphyrin-containing compound metabolism; siroheme biosynthesis; precorrin-2 from uroporphyrinogen III: step 1/1. Its pathway is porphyrin-containing compound metabolism; siroheme biosynthesis; siroheme from sirohydrochlorin: step 1/1. It participates in porphyrin-containing compound metabolism; siroheme biosynthesis; sirohydrochlorin from precorrin-2: step 1/1. Multifunctional enzyme that catalyzes the SAM-dependent methylations of uroporphyrinogen III at position C-2 and C-7 to form precorrin-2 via precorrin-1. Then it catalyzes the NAD-dependent ring dehydrogenation of precorrin-2 to yield sirohydrochlorin. Finally, it catalyzes the ferrochelation of sirohydrochlorin to yield siroheme. This chain is Siroheme synthase, found in Salmonella choleraesuis (strain SC-B67).